Consider the following 250-residue polypeptide: Small ribosomal subunit protein uS3 (250 aa).

Positions 39–111 (IRTLIKNHYP…KIQINIFEVK (73 aa)) constitute a KH type-2 domain.

The protein belongs to the universal ribosomal protein uS3 family. In terms of assembly, part of the 30S ribosomal subunit. Forms a tight complex with proteins S10 and S14.

In terms of biological role, binds the lower part of the 30S subunit head. Binds mRNA in the 70S ribosome, positioning it for translation. This is Small ribosomal subunit protein uS3 from Elm witches'-broom phytoplasma.